Consider the following 527-residue polypeptide: Glucose-6-phosphate isomerase (527 aa).

Glu323 (proton donor) is an active-site residue. Residues His352 and Lys454 contribute to the active site.

The protein belongs to the GPI family.

It is found in the cytoplasm. It catalyses the reaction alpha-D-glucose 6-phosphate = beta-D-fructose 6-phosphate. The protein operates within carbohydrate biosynthesis; gluconeogenesis. Its pathway is carbohydrate degradation; glycolysis; D-glyceraldehyde 3-phosphate and glycerone phosphate from D-glucose: step 2/4. Its function is as follows. Catalyzes the reversible isomerization of glucose-6-phosphate to fructose-6-phosphate. The polypeptide is Glucose-6-phosphate isomerase (Prochlorococcus marinus (strain MIT 9312)).